The following is a 207-amino-acid chain: Casparian strip membrane protein 1 (207 aa).

The segment covering 1 to 12 has biased composition (polar residues); it reads MEADSTTINVTE. Residues 1–20 are disordered; it reads MEADSTTINVTETPKERKGK. At 1-48 the chain is on the cytoplasmic side; sequence MEADSTTINVTETPKERKGKAPLLAAPPASSGVKRVLQKAPKGGYKRG. The helical transmembrane segment at 49–69 threads the bilayer; the sequence is LAVFDVVLRLAGIATALGAAI. Over 70-98 the chain is Extracellular; sequence AMGSTDQTLPFFTQFFQFKAEFDDLPAFT. A helical transmembrane segment spans residues 99-119; that stretch reads FFVIANAITAAYLALTIPISI. At 120-131 the chain is on the cytoplasmic side; sequence VCIIRPHLVAPR. A helical transmembrane segment spans residues 132–152; it reads VLLIFLDTVMVALTTAAAGGT. Topologically, residues 153–184 are extracellular; it reads ASIVYLAHNGNSDANWPAICQQFNDXCQKVSG. The chain crosses the membrane as a helical span at residues 185 to 205; it reads AVVASFLTVVVLMLLIVLSAF. Topologically, residues 206-207 are cytoplasmic; the sequence is AL.

The protein belongs to the Casparian strip membrane proteins (CASP) family. As to quaternary structure, homodimer and heterodimers.

Its subcellular location is the cell membrane. In terms of biological role, regulates membrane-cell wall junctions and localized cell wall deposition. Required for establishment of the Casparian strip membrane domain (CSD) and the subsequent formation of Casparian strips, a cell wall modification of the root endodermis that determines an apoplastic barrier between the intraorganismal apoplasm and the extraorganismal apoplasm and prevents lateral diffusion. This is Casparian strip membrane protein 1 from Cynara cardunculus var. scolymus (Globe artichoke).